Here is a 202-residue protein sequence, read N- to C-terminus: Holliday junction branch migration complex subunit RuvA (202 aa).

The segment at 1–65 (MIAYVEGRLA…EDALELYGFA (65 aa)) is domain I. The interval 66 to 144 (TWDERQTFIV…VEDLPAAAPL (79 aa)) is domain II. Residues 145-155 (VTGGAPGGVFR) form a flexible linker region. A domain III region spans residues 155 to 202 (RDALAGLANLGYGEEEASHVLKEVLHGEPDLDVGGALRAALRALARGR).

The protein belongs to the RuvA family. In terms of assembly, homotetramer. Forms an RuvA(8)-RuvB(12)-Holliday junction (HJ) complex. HJ DNA is sandwiched between 2 RuvA tetramers; dsDNA enters through RuvA and exits via RuvB. An RuvB hexamer assembles on each DNA strand where it exits the tetramer. Each RuvB hexamer is contacted by two RuvA subunits (via domain III) on 2 adjacent RuvB subunits; this complex drives branch migration. In the full resolvosome a probable DNA-RuvA(4)-RuvB(12)-RuvC(2) complex forms which resolves the HJ.

The protein localises to the cytoplasm. Functionally, the RuvA-RuvB-RuvC complex processes Holliday junction (HJ) DNA during genetic recombination and DNA repair, while the RuvA-RuvB complex plays an important role in the rescue of blocked DNA replication forks via replication fork reversal (RFR). RuvA specifically binds to HJ cruciform DNA, conferring on it an open structure. The RuvB hexamer acts as an ATP-dependent pump, pulling dsDNA into and through the RuvAB complex. HJ branch migration allows RuvC to scan DNA until it finds its consensus sequence, where it cleaves and resolves the cruciform DNA. This is Holliday junction branch migration complex subunit RuvA from Nitratidesulfovibrio vulgaris (strain DP4) (Desulfovibrio vulgaris).